The chain runs to 418 residues: MESLTDPSKLDSGKEPHISLIPNKQDRTLTIVDTGIGMTKADLINNLGTITKSETKVFMEVLQAGADISMIGQFSVGFYSAYSVAEKVTVITKHNNDEQYAWESSLRGSFTEYREFYKSLTINWEDYLAVKHFSVEGQLEFRAFLFVPRLAPFELLETRKKKNKIKLSARRDLIMDNCEELIPEYLNFIRGVVDSEDLPLNIFRETKDQVANSTIVQRLWKHGLEVIYTIEPIDEYCVQQLKEFEGKTLVSVTKEDLELPEDEEEKKKQEEGKQKTKQKKNQSLRTSAKSTYGWTANMERIMKAQALRDNSTTGYMAAKKHLEINPDHSFIDTLRQKAETDKNDKSVKDLVILLYETALLSSDFGLEGPQTHANRIYRMNKLGLGTDEDDPTADDTSAAVTEEMPPLEGDDDTSRMEK.

ATP is bound by residues Asp33, Lys52, Phe78, and Arg204. Disordered regions lie at residues 255–289 (EDLE…TSAK) and 383–418 (GLGT…RMEK). A compositionally biased stretch (basic and acidic residues) spans 265–274 (EKKKQEEGKQ).

Belongs to the heat shock protein 90 family. In terms of assembly, homodimer.

The protein localises to the cytoplasm. Its function is as follows. Putative molecular chaperone that may promote the maturation, structural maintenance and proper regulation of specific target proteins. This chain is Putative heat shock protein HSP 90-alpha A4 (HSP90AA4P), found in Homo sapiens (Human).